Consider the following 363-residue polypeptide: 3-dehydroquinate synthase (363 aa).

NAD(+)-binding positions include 109 to 113 (GASTD), 133 to 134 (TT), K146, and K155. Zn(2+) contacts are provided by E188, H251, and H267.

This sequence belongs to the sugar phosphate cyclases superfamily. Dehydroquinate synthase family. It depends on NAD(+) as a cofactor. Requires Co(2+) as cofactor. Zn(2+) is required as a cofactor.

It localises to the cytoplasm. The enzyme catalyses 7-phospho-2-dehydro-3-deoxy-D-arabino-heptonate = 3-dehydroquinate + phosphate. It participates in metabolic intermediate biosynthesis; chorismate biosynthesis; chorismate from D-erythrose 4-phosphate and phosphoenolpyruvate: step 2/7. Its function is as follows. Catalyzes the conversion of 3-deoxy-D-arabino-heptulosonate 7-phosphate (DAHP) to dehydroquinate (DHQ). This Streptomyces coelicolor (strain ATCC BAA-471 / A3(2) / M145) protein is 3-dehydroquinate synthase.